The sequence spans 373 residues: MQTYLVGGAVRDKLLGLGVKDRDWVVVGATPEDMIQRGFKQVGADFPVFLHPDTGEEYALARTERKQGRGYHGFSVYSAPDVSLEDDLRRRDLTINAMAETENGDLVDPFNGHADLEQKKLRHVSEAFAEDPLRILRTARFAARLQPLGFSICRETMALMRQMVTSGELGDLVPERVWQEVQRALHEQAPGVFFDVLRELGALQVLIPELTDEQPFRQGLSALQCIHRKQGSTAQHYAALLSGVPEPDAVARAKAMKSPNDCRELTHLVGLFMAQLNGASPETRLTPELAMELLDKADFWRRPDRFGVLLGTLACTLQSEPDHLIQQLELAAHRAQSVTPHPFLQKGIQGKALGEAIRKERVARITEALHLPE.

Residues glycine 8 and arginine 11 each coordinate ATP. 2 residues coordinate CTP: glycine 8 and arginine 11. Residues aspartate 21 and aspartate 23 each contribute to the Mg(2+) site. ATP-binding residues include arginine 91, arginine 137, and arginine 140. Residues arginine 91, arginine 137, and arginine 140 each coordinate CTP.

Belongs to the tRNA nucleotidyltransferase/poly(A) polymerase family. Bacterial CCA-adding enzyme type 2 subfamily. Mg(2+) serves as cofactor.

The enzyme catalyses a tRNA precursor + 2 CTP + ATP = a tRNA with a 3' CCA end + 3 diphosphate. It carries out the reaction a tRNA with a 3' CCA end + 2 CTP + ATP = a tRNA with a 3' CCACCA end + 3 diphosphate. Its function is as follows. Catalyzes the addition and repair of the essential 3'-terminal CCA sequence in tRNAs without using a nucleic acid template. Adds these three nucleotides in the order of C, C, and A to the tRNA nucleotide-73, using CTP and ATP as substrates and producing inorganic pyrophosphate. tRNA 3'-terminal CCA addition is required both for tRNA processing and repair. Also involved in tRNA surveillance by mediating tandem CCA addition to generate a CCACCA at the 3' terminus of unstable tRNAs. While stable tRNAs receive only 3'-terminal CCA, unstable tRNAs are marked with CCACCA and rapidly degraded. This Marinobacter nauticus (strain ATCC 700491 / DSM 11845 / VT8) (Marinobacter aquaeolei) protein is CCA-adding enzyme.